The sequence spans 397 residues: Phosphoglycerate kinase (397 aa).

Substrate contacts are provided by residues 21–23, Arg-36, 59–62, Arg-119, and Arg-152; these read DVN and HFGR. Residues Lys-202, Glu-324, and 354 to 357 each bind ATP; that span reads GGDT.

It belongs to the phosphoglycerate kinase family. As to quaternary structure, monomer.

The protein localises to the cytoplasm. The catalysed reaction is (2R)-3-phosphoglycerate + ATP = (2R)-3-phospho-glyceroyl phosphate + ADP. It functions in the pathway carbohydrate degradation; glycolysis; pyruvate from D-glyceraldehyde 3-phosphate: step 2/5. This chain is Phosphoglycerate kinase, found in Cereibacter sphaeroides (strain ATCC 17025 / ATH 2.4.3) (Rhodobacter sphaeroides).